Consider the following 706-residue polypeptide: Capsid vertex component 1 (706 aa).

The interval 321-347 (DSGRFVNSGPQRHLPPQGPRSPASRDC) is disordered.

The protein belongs to the herpesviridae CVC1 protein family. Interacts (via C-terminus) with capsid vertex component 2/CVC2.

It localises to the virion. The protein localises to the host nucleus. Capsid vertex-specific component that plays a role during viral DNA encapsidation, assuring correct genome cleavage and presumably stabilizing capsids that contain full-length viral genomes. This chain is Capsid vertex component 1, found in Equus caballus (Horse).